We begin with the raw amino-acid sequence, 261 residues long: MSETRESNESTVSSLQTKLLLNDGISENNKKNVILLNQIVPFILNTSHYMTDLMYVLYYLAQKQEDEVLNHSGTFISHKKELLALKSDICELIYDLRTGFRLLLDSCELDHFETPGKCRHLIEKVLVTSIYGVNRYIFQELNRLNVDFKDEFILQMQNCLSGFVNLYKFLNKIPMSKQQSQMNDLQMKILVNVLQNELLPIWKFQLDLLNCKLFNELSKDKGLINIYRKATNDSVIDVSKGEPFIRYVNWLKDQIIGEMTV.

This is an uncharacterized protein from Saccharomyces cerevisiae (strain ATCC 204508 / S288c) (Baker's yeast).